A 118-amino-acid chain; its full sequence is Small ribosomal subunit protein uS13 (118 aa).

Residues 94–118 (SLPLRGQRTKTNARTRKGPRKPIRK) form a disordered region.

It belongs to the universal ribosomal protein uS13 family. Part of the 30S ribosomal subunit. Forms a loose heterodimer with protein S19. Forms two bridges to the 50S subunit in the 70S ribosome.

Its function is as follows. Located at the top of the head of the 30S subunit, it contacts several helices of the 16S rRNA. In the 70S ribosome it contacts the 23S rRNA (bridge B1a) and protein L5 of the 50S subunit (bridge B1b), connecting the 2 subunits; these bridges are implicated in subunit movement. Contacts the tRNAs in the A and P-sites. This Shewanella baltica (strain OS223) protein is Small ribosomal subunit protein uS13.